Consider the following 488-residue polypeptide: Proline--tRNA ligase (488 aa).

It belongs to the class-II aminoacyl-tRNA synthetase family. ProS type 3 subfamily. In terms of assembly, homodimer.

The protein localises to the cytoplasm. It catalyses the reaction tRNA(Pro) + L-proline + ATP = L-prolyl-tRNA(Pro) + AMP + diphosphate. Its function is as follows. Catalyzes the attachment of proline to tRNA(Pro) in a two-step reaction: proline is first activated by ATP to form Pro-AMP and then transferred to the acceptor end of tRNA(Pro). In Symbiobacterium thermophilum (strain DSM 24528 / JCM 14929 / IAM 14863 / T), this protein is Proline--tRNA ligase.